Here is a 364-residue protein sequence, read N- to C-terminus: Spermidine/putrescine import ATP-binding protein PotA (364 aa).

The ABC transporter domain occupies 6–236; it reads IEIRQIYKSY…PANLHVAMFI (231 aa). Residue 38–45 coordinates ATP; the sequence is GPSGCGKT.

The protein belongs to the ABC transporter superfamily. Spermidine/putrescine importer (TC 3.A.1.11.1) family. As to quaternary structure, the complex is composed of two ATP-binding proteins (PotA), two transmembrane proteins (PotB and PotC) and a solute-binding protein (PotD).

It localises to the cell inner membrane. The catalysed reaction is ATP + H2O + polyamine-[polyamine-binding protein]Side 1 = ADP + phosphate + polyamineSide 2 + [polyamine-binding protein]Side 1.. Functionally, part of the ABC transporter complex PotABCD involved in spermidine/putrescine import. Responsible for energy coupling to the transport system. This is Spermidine/putrescine import ATP-binding protein PotA from Legionella pneumophila subsp. pneumophila (strain Philadelphia 1 / ATCC 33152 / DSM 7513).